The chain runs to 401 residues: Mu-type opioid receptor (401 aa).

Residues methionine 1 to isoleucine 69 lie on the Extracellular side of the membrane. N-linked (GlcNAc...) asparagine glycosylation is found at asparagine 9, asparagine 12, asparagine 34, asparagine 41, and asparagine 49. A helical transmembrane segment spans residues threonine 70 to tyrosine 94. Over valine 95–asparagine 107 the chain is Cytoplasmic. The helical transmembrane segment at isoleucine 108–leucine 132 threads the bilayer. The Extracellular portion of the chain corresponds to methionine 133–cysteine 143. The cysteines at positions 143 and 220 are disulfide-linked. The helical transmembrane segment at lysine 144–valine 166 threads the bilayer. The Cytoplasmic portion of the chain corresponds to aspartate 167–asparagine 186. At tyrosine 169 the chain carries Phosphotyrosine. A helical membrane pass occupies residues alanine 187–methionine 208. Topologically, residues alanine 209 to tryptophan 231 are extracellular. Residues glutamate 232–glycine 256 form a helical membrane-spanning segment. The Cytoplasmic portion of the chain corresponds to leucine 257 to arginine 280. A helical transmembrane segment spans residues isoleucine 281–alanine 307. Over leucine 308–threonine 315 the chain is Extracellular. Residues phenylalanine 316–tyrosine 339 form a helical membrane-spanning segment. The NPxxY; plays a role in stabilizing the activated conformation of the receptor signature appears at asparagine 335–tyrosine 339. The Cytoplasmic portion of the chain corresponds to alanine 340–proline 401. The S-palmitoyl cysteine moiety is linked to residue cysteine 354. The tract at residues asparagine 365 to glutamine 389 is disordered. A Phosphoserine modification is found at serine 366. Residue threonine 373 is modified to Phosphothreonine. Position 378 is a phosphoserine (serine 378). A Phosphothreonine modification is found at threonine 397.

It belongs to the G-protein coupled receptor 1 family. In terms of assembly, forms homooligomers and heterooligomers with other GPCRs, such as OPRD1, OPRK1, OPRL1, NPFFR2, ADRA2A, SSTR2, CNR1 and CCR5 (probably in dimeric forms). Interacts with heterotrimeric G proteins; interaction with a heterotrimeric complex containing GNAI1, GNB1 and GNG2 stabilizes the active conformation of the receptor and increases its affinity for endomorphin-2, the synthetic opioid peptide DAMGO and for morphinan agonists. Interacts with PPL; the interaction disrupts agonist-mediated G-protein activation. Interacts (via C-terminus) with DNAJB4 (via C-terminus). Interacts with calmodulin; the interaction inhibits the constitutive activity of OPRM1; it abolishes basal and attenuates agonist-stimulated G-protein coupling. Interacts with FLNA, PLD2, RANBP9 and WLS and GPM6A. Interacts with RTP4. Interacts with SYP and GNAS. Interacts with RGS9, RGS17, RGS20, RGS4, PPP1R9B and HINT1. In terms of processing, phosphorylated. Differentially phosphorylated in basal and agonist-induced conditions. Agonist-mediated phosphorylation modulates receptor internalization. Phosphorylated by GRK2 in a agonist-dependent manner. Phosphorylation at Tyr-169 requires receptor activation, is dependent on non-receptor protein tyrosine kinase Src and results in a decrease in agonist efficacy by reducing G-protein coupling efficiency. Phosphorylated on tyrosine residues; the phosphorylation is involved in agonist-induced G-protein-independent receptor down-regulation. Phosphorylation at Ser-378 is involved in G-protein-dependent but not beta-arrestin-dependent activation of the ERK pathway. Post-translationally, ubiquitinated. A basal ubiquitination seems not to be related to degradation. Ubiquitination is increased upon formation of OPRM1:OPRD1 oligomers leading to proteasomal degradation; the ubiquitination is diminished by RTP4.

The protein localises to the cell membrane. Its subcellular location is the cell projection. The protein resides in the axon. It is found in the perikaryon. It localises to the dendrite. The protein localises to the endosome. Receptor for endogenous opioids such as beta-endorphin and endomorphin. Receptor for natural and synthetic opioids including morphine, heroin, DAMGO, fentanyl, etorphine, buprenorphin and methadone. Also activated by enkephalin peptides, such as Met-enkephalin or Met-enkephalin-Arg-Phe, with higher affinity for Met-enkephalin-Arg-Phe. Agonist binding to the receptor induces coupling to an inactive GDP-bound heterotrimeric G-protein complex and subsequent exchange of GDP for GTP in the G-protein alpha subunit leading to dissociation of the G-protein complex with the free GTP-bound G-protein alpha and the G-protein beta-gamma dimer activating downstream cellular effectors. The agonist- and cell type-specific activity is predominantly coupled to pertussis toxin-sensitive G(i) and G(o) G alpha proteins, GNAI1, GNAI2, GNAI3 and GNAO1, and to a lesser extent to pertussis toxin-insensitive G alpha proteins GNAZ and GNA15. They mediate an array of downstream cellular responses, including inhibition of adenylate cyclase activity and both N-type and L-type calcium channels, activation of inward rectifying potassium channels, mitogen-activated protein kinase (MAPK), phospholipase C (PLC), phosphoinositide/protein kinase (PKC), phosphoinositide 3-kinase (PI3K) and regulation of NF-kappa-B. Also couples to adenylate cyclase stimulatory G alpha proteins. The selective temporal coupling to G-proteins and subsequent signaling can be regulated by RGSZ proteins, such as RGS9, RGS17 and RGS4. Phosphorylation by members of the GPRK subfamily of Ser/Thr protein kinases and association with beta-arrestins is involved in short-term receptor desensitization. Beta-arrestins associate with the GPRK-phosphorylated receptor and uncouple it from the G-protein thus terminating signal transduction. The phosphorylated receptor is internalized through endocytosis via clathrin-coated pits which involves beta-arrestins. The activation of the ERK pathway occurs either in a G-protein-dependent or a beta-arrestin-dependent manner and is regulated by agonist-specific receptor phosphorylation. Acts as a class A G-protein coupled receptor (GPCR) which dissociates from beta-arrestin at or near the plasma membrane and undergoes rapid recycling. Receptor down-regulation pathways are varying with the agonist and occur dependent or independent of G-protein coupling. Endogenous ligands induce rapid desensitization, endocytosis and recycling. Heterooligomerization with other GPCRs can modulate agonist binding, signaling and trafficking properties. Involved in neurogenesis. In Bos taurus (Bovine), this protein is Mu-type opioid receptor (OPRM1).